The following is a 229-amino-acid chain: Cytidylate kinase (229 aa).

12–20 is a binding site for ATP; the sequence is GPSGSGKGT.

This sequence belongs to the cytidylate kinase family. Type 1 subfamily.

The protein localises to the cytoplasm. It catalyses the reaction CMP + ATP = CDP + ADP. The catalysed reaction is dCMP + ATP = dCDP + ADP. This is Cytidylate kinase from Pseudomonas fluorescens (strain Pf0-1).